The primary structure comprises 387 residues: Bifunctional chorismate mutase/prephenate dehydratase (387 aa).

The Chorismate mutase domain maps to 1 to 92 (MNPDNPLLAL…DSVLTQQALL (92 aa)). 7 residues coordinate substrate: Arg11, Arg28, Lys39, Asp48, Glu52, Ser84, and Gln88. The 181-residue stretch at 105 to 285 (RIAFLGPKGS…NHTRFIVLAR (181 aa)) folds into the Prephenate dehydratase domain. Residues 299–376 (TLIMATGQQA…RSLKVLGCYP (78 aa)) enclose the ACT domain.

Its subcellular location is the cytoplasm. The enzyme catalyses chorismate = prephenate. It catalyses the reaction prephenate + H(+) = 3-phenylpyruvate + CO2 + H2O. It functions in the pathway amino-acid biosynthesis; L-phenylalanine biosynthesis; phenylpyruvate from prephenate: step 1/1. The protein operates within metabolic intermediate biosynthesis; prephenate biosynthesis; prephenate from chorismate: step 1/1. Functionally, catalyzes the Claisen rearrangement of chorismate to prephenate and the decarboxylation/dehydration of prephenate to phenylpyruvate. The protein is Bifunctional chorismate mutase/prephenate dehydratase (pheA) of Enterobacter agglomerans (Erwinia herbicola).